A 200-amino-acid polypeptide reads, in one-letter code: Holliday junction branch migration complex subunit RuvA (200 aa).

The segment at 1–63 (MIALLTGQIA…EDAILLYGFR (63 aa)) is domain I. The segment at 64 to 142 (TRTEKSFFQL…KLDSGSIPAG (79 aa)) is domain II. Positions 143-153 (DAVGRSLPAGS) are flexible linker. Residues 153–200 (SVLDDVSSALVNLGYKDPQVRKVLAELDCAGSASVEEVLKQALKILMK) are domain III.

It belongs to the RuvA family. In terms of assembly, homotetramer. Forms an RuvA(8)-RuvB(12)-Holliday junction (HJ) complex. HJ DNA is sandwiched between 2 RuvA tetramers; dsDNA enters through RuvA and exits via RuvB. An RuvB hexamer assembles on each DNA strand where it exits the tetramer. Each RuvB hexamer is contacted by two RuvA subunits (via domain III) on 2 adjacent RuvB subunits; this complex drives branch migration. In the full resolvosome a probable DNA-RuvA(4)-RuvB(12)-RuvC(2) complex forms which resolves the HJ.

It localises to the cytoplasm. In terms of biological role, the RuvA-RuvB-RuvC complex processes Holliday junction (HJ) DNA during genetic recombination and DNA repair, while the RuvA-RuvB complex plays an important role in the rescue of blocked DNA replication forks via replication fork reversal (RFR). RuvA specifically binds to HJ cruciform DNA, conferring on it an open structure. The RuvB hexamer acts as an ATP-dependent pump, pulling dsDNA into and through the RuvAB complex. HJ branch migration allows RuvC to scan DNA until it finds its consensus sequence, where it cleaves and resolves the cruciform DNA. This chain is Holliday junction branch migration complex subunit RuvA, found in Trichlorobacter lovleyi (strain ATCC BAA-1151 / DSM 17278 / SZ) (Geobacter lovleyi).